An 80-amino-acid polypeptide reads, in one-letter code: Putative membrane protein insertion efficiency factor (80 aa).

The segment at 60 to 80 (SKTGKDPVPDRFSLKRNQEGE) is disordered. The span at 62-80 (TGKDPVPDRFSLKRNQEGE) shows a compositional bias: basic and acidic residues.

The protein belongs to the UPF0161 family.

It localises to the cell membrane. Its function is as follows. Could be involved in insertion of integral membrane proteins into the membrane. This is Putative membrane protein insertion efficiency factor from Streptococcus pneumoniae serotype 4 (strain ATCC BAA-334 / TIGR4).